A 289-amino-acid polypeptide reads, in one-letter code: MIRDQAKTPGRAKSAAAAKASPAAKGGGNEAAQSAAGKAAAKPAAKPATSKSGKGVIAVAPPSFRRERALLKQGIWPVAGCDEAGRGPLAGPVVAAAVILDPNRIPKGLDDSKRLSAEQREALFDKICKTSAFAVAFASPARIDRDNILRASLWALSRAVRALPEAPKHVFVDGRDRIDVDCHCEAVIGGDGLVMSIAAASIVAKVTRDRLMCALAQDCPGYGFEQHKGYGVPEHLAALDRLGPSVHHRSLFAPVVAARRKHQPWADVPEPDLFADVTVVTSSEIALGA.

The tract at residues Met-1–Gly-55 is disordered. 2 stretches are compositionally biased toward low complexity: residues Lys-7–Ala-24 and Ala-31–Gly-55. Positions Trp-76 to Pro-264 constitute an RNase H type-2 domain. Residues Asp-82, Glu-83, and Asp-173 each contribute to the a divalent metal cation site.

It belongs to the RNase HII family. The cofactor is Mn(2+). It depends on Mg(2+) as a cofactor.

The protein localises to the cytoplasm. The enzyme catalyses Endonucleolytic cleavage to 5'-phosphomonoester.. In terms of biological role, endonuclease that specifically degrades the RNA of RNA-DNA hybrids. This chain is Ribonuclease HII, found in Bradyrhizobium sp. (strain BTAi1 / ATCC BAA-1182).